Here is a 382-residue protein sequence, read N- to C-terminus: MGAFLDKPKMEKHNAQGQGNGLRYGLSSMQGWRVEMEDAHTAVIGLPSGLETWSFFAVYDGHAGSQVAKYCCEHLLDHITNNQDFKGSAGAPSVENVKNGIRTGFLEIDEHMRVMSEKKHGADRSGSTAVGVLISPQHTYFINCGDSRGLLCRNRKVHFFTQDHKPSNPLEKERIQNAGGSVMIQRVNGSLAVSRALGDFDYKCVHGKGPTEQLVSPEPEVHDIERSEEDDQFIILACDGIWDVMGNEELCDFVRSRLEVTDDLEKVCNEVVDTCLYKGSRDNMSVILICFPNAPKVSPEAVKKEAELDKYLECRVEEILKKQGEGVPDLVHVMRTLASENIPSLPPGGELASKRNVIEAVYNRLNPYKNDDTDSTSTDDMW.

A lipid anchor (N-myristoyl glycine) is attached at Gly-2. The 269-residue stretch at 23 to 291 (RYGLSSMQGW…DNMSVILICF (269 aa)) folds into the PPM-type phosphatase domain. Asp-60, Gly-61, Asp-239, and Asp-282 together coordinate Mn(2+). Phosphoserine is present on residues Ser-375 and Ser-377.

Belongs to the PP2C family. Monomer. Interacts with SMAD2; the interaction dephosphorylates SMAD2 in its C-terminal SXS motif resulting in disruption of the SMAD2/SMAD4 complex, SMAD2 nuclear export and termination of the TGF-beta-mediated signaling. Interacts with SMAD2; the interaction dephosphorylates SMAD2 in its C-terminal SXS motif resulting in disruption of the SMAD2/SMAD4 complex, SMAD2 nuclear export and termination of the TGF-beta-mediated signaling. Interacts with the phosphorylated form of IKBKB/IKKB. Requires Mg(2+) as cofactor. It depends on Mn(2+) as a cofactor. Post-translationally, N-myristoylation is essential for the recognition of its substrates for dephosphorylation.

The protein localises to the nucleus. It localises to the cytoplasm. Its subcellular location is the cytosol. It is found in the membrane. The enzyme catalyses O-phospho-L-seryl-[protein] + H2O = L-seryl-[protein] + phosphate. It catalyses the reaction O-phospho-L-threonyl-[protein] + H2O = L-threonyl-[protein] + phosphate. Its function is as follows. Enzyme with a broad specificity. Negatively regulates TGF-beta signaling through dephosphorylating SMAD2 and SMAD3, resulting in their dissociation from SMAD4, nuclear export of the SMADs and termination of the TGF-beta-mediated signaling. Dephosphorylates PRKAA1 and PRKAA2. Plays an important role in the termination of TNF-alpha-mediated NF-kappa-B activation through dephosphorylating and inactivating IKBKB/IKKB. The polypeptide is Protein phosphatase 1A (PPM1A) (Oryctolagus cuniculus (Rabbit)).